A 260-amino-acid polypeptide reads, in one-letter code: 14-3-3 protein 4 (260 aa).

Residues 238-260 (DNADDVGDDIKEASKPESGEGQQ) form a disordered region. Positions 245-260 (DDIKEASKPESGEGQQ) are enriched in basic and acidic residues.

This sequence belongs to the 14-3-3 family. In terms of assembly, homodimer.

The chain is 14-3-3 protein 4 (TFT4) from Solanum lycopersicum (Tomato).